Reading from the N-terminus, the 391-residue chain is MSIINMTDLDLAGKRVLIRQDLNVPVKGGKVTSDARIKASLGTLKHALEAGAKVMVMSHLGRPTEGEYDSAFSLQPVVDYLNDVLECSVSLASDYLNGVDVKAGELVVLENVRFNVGEKKDDEALSKQYAALCDVYVMDAFGTAHRAQASTHGAGKFAPVACAGPLLAGELEALGKALHNPARPMLAIVGGSKVSTKLTVLESLSNKVDQLIVGGGIANTFIAATGNNVGKSLYEADLIPEANRLLAAAKDAGGNIPVPVDVVTGKEFSEQAQATLKAVSDVADDDMIFDIGPQTATELAELIKNAGTIVWNGPVGVFEFDQFGEGTKAIAMAIAQSNAFSIAGGGDTLAAVDKYGIEDKISYISTGGGAFLEFLEGKALPAVTMLEARGA.

Residues 21–23 (DLN), Arg36, 59–62 (HLGR), Arg113, and Arg146 contribute to the substrate site. ATP contacts are provided by residues Lys197, Glu319, and 345–348 (GGDT).

Belongs to the phosphoglycerate kinase family. As to quaternary structure, monomer.

Its subcellular location is the cytoplasm. The catalysed reaction is (2R)-3-phosphoglycerate + ATP = (2R)-3-phospho-glyceroyl phosphate + ADP. The protein operates within carbohydrate degradation; glycolysis; pyruvate from D-glyceraldehyde 3-phosphate: step 2/5. This chain is Phosphoglycerate kinase, found in Pseudoalteromonas atlantica (strain T6c / ATCC BAA-1087).